Reading from the N-terminus, the 644-residue chain is Protein FAM149B1 (644 aa).

Disordered regions lie at residues 392 to 490 (NQSD…NTLL), 551 to 575 (TFRS…RPGR), and 609 to 644 (GHFP…RPGL). The segment covering 395–404 (DCRDSEDKVS) has biased composition (basic and acidic residues). The segment covering 449–459 (PITSSVTQPIT) has biased composition (polar residues). The segment covering 626–644 (QARSHNRGGSTARSSRPGL) has biased composition (polar residues).

The protein belongs to the FAM149 family.

This Danio rerio (Zebrafish) protein is Protein FAM149B1 (fam149b1).